The sequence spans 465 residues: Asparagine--tRNA ligase (465 aa).

Belongs to the class-II aminoacyl-tRNA synthetase family. In terms of assembly, homodimer.

It is found in the cytoplasm. It carries out the reaction tRNA(Asn) + L-asparagine + ATP = L-asparaginyl-tRNA(Asn) + AMP + diphosphate + H(+). This chain is Asparagine--tRNA ligase, found in Clostridium perfringens (strain ATCC 13124 / DSM 756 / JCM 1290 / NCIMB 6125 / NCTC 8237 / Type A).